We begin with the raw amino-acid sequence, 157 residues long: 2-C-methyl-D-erythritol 2,4-cyclodiphosphate synthase (157 aa).

A divalent metal cation-binding residues include Asp8 and His10. 4-CDP-2-C-methyl-D-erythritol 2-phosphate contacts are provided by residues 8-10 (DVH) and 34-35 (HS). His42 lines the a divalent metal cation pocket. 4-CDP-2-C-methyl-D-erythritol 2-phosphate-binding positions include 56–58 (DIG), 61–65 (FPDTD), 100–106 (AQAPKMA), 132–135 (TTSE), Phe139, and Arg142.

Belongs to the IspF family. In terms of assembly, homotrimer. A divalent metal cation serves as cofactor.

It catalyses the reaction 4-CDP-2-C-methyl-D-erythritol 2-phosphate = 2-C-methyl-D-erythritol 2,4-cyclic diphosphate + CMP. It participates in isoprenoid biosynthesis; isopentenyl diphosphate biosynthesis via DXP pathway; isopentenyl diphosphate from 1-deoxy-D-xylulose 5-phosphate: step 4/6. Its function is as follows. Involved in the biosynthesis of isopentenyl diphosphate (IPP) and dimethylallyl diphosphate (DMAPP), two major building blocks of isoprenoid compounds. Catalyzes the conversion of 4-diphosphocytidyl-2-C-methyl-D-erythritol 2-phosphate (CDP-ME2P) to 2-C-methyl-D-erythritol 2,4-cyclodiphosphate (ME-CPP) with a corresponding release of cytidine 5-monophosphate (CMP). This is 2-C-methyl-D-erythritol 2,4-cyclodiphosphate synthase from Photobacterium profundum (strain SS9).